A 374-amino-acid polypeptide reads, in one-letter code: Aminomethyltransferase (374 aa).

The protein belongs to the GcvT family. As to quaternary structure, the glycine cleavage system is composed of four proteins: P, T, L and H.

The enzyme catalyses N(6)-[(R)-S(8)-aminomethyldihydrolipoyl]-L-lysyl-[protein] + (6S)-5,6,7,8-tetrahydrofolate = N(6)-[(R)-dihydrolipoyl]-L-lysyl-[protein] + (6R)-5,10-methylene-5,6,7,8-tetrahydrofolate + NH4(+). Functionally, the glycine cleavage system catalyzes the degradation of glycine. The chain is Aminomethyltransferase from Caldanaerobacter subterraneus subsp. tengcongensis (strain DSM 15242 / JCM 11007 / NBRC 100824 / MB4) (Thermoanaerobacter tengcongensis).